Here is a 204-residue protein sequence, read N- to C-terminus: Protein GET1 (204 aa).

Residues 1 to 4 (MPSL) lie on the Lumenal side of the membrane. The chain crosses the membrane as a helical span at residues 5-24 (LLIIFVTELVVQLVNTLGAT). At 25–110 (TINDLLWRIY…KFDRTLTTTR (86 aa)) the chain is on the cytoplasmic side. A coiled-coil region spans residues 72 to 107 (AKWAKLRRQHDKLLEDLEKKKASLEAARTKFDRTLT). A helical membrane pass occupies residues 111–131 (TVSTRSVQWFLPFWYSKEPMF). Topologically, residues 132 to 155 (WLPYGWFPYYVEWFASFPRAPMGS) are lumenal. Residues 156 to 172 (VSIVVWQWACTAVIALM) traverse the membrane as a helical segment. At 173–204 (IEAATAALVYVAAKQSQKIRQPVPAQSEKKDS) the chain is on the cytoplasmic side.

The protein belongs to the WRB/GET1 family. Interacts with GET3.

Its subcellular location is the endoplasmic reticulum membrane. Its function is as follows. Required for the post-translational delivery of tail-anchored (TA) proteins to the endoplasmic reticulum. Acts as a membrane receptor for soluble GET3, which recognizes and selectively binds the transmembrane domain of TA proteins in the cytosol. This Podospora anserina (strain S / ATCC MYA-4624 / DSM 980 / FGSC 10383) (Pleurage anserina) protein is Protein GET1.